Here is a 202-residue protein sequence, read N- to C-terminus: MESSSMTTHQEEPLDLSTGNHGNSELSDEQQIMQVMESCGMFLQQNLFAWFLQSMLEASASQPQLTQDEPPENDTKENDLVKQNKSEVNDENESTPSPTQNSRRRTSTGKIDRRMVGKMCTRRYEANARERNRVQQLSKMFDQLRVCLPIEDDAKISKLATLKVASSYIGYLGAILQENSNDEEEFKKQLQVELECAKTLRK.

Disordered stretches follow at residues 1 to 26 (MESSSMTTHQEEPLDLSTGNHGNSEL) and 83 to 112 (QNKSEVNDENESTPSPTQNSRRRTSTGKID). Residues 17–26 (STGNHGNSEL) are compositionally biased toward polar residues. Residues 121–134 (TRRYEANARERNRV) form a basic motif region. The region spanning 121 to 172 (TRRYEANARERNRVQQLSKMFDQLRVCLPIEDDAKISKLATLKVASSYIGYL) is the bHLH domain. The segment at 135-172 (QQLSKMFDQLRVCLPIEDDAKISKLATLKVASSYIGYL) is helix-loop-helix motif.

In terms of assembly, heterodimer with hlh-2. In terms of tissue distribution, expressed in intestine, neurons in head, body and tail, and in body hypodermis, and vulva. Expressed in neurons in the male-specific genital sensilla (simple sense organs) known as rays.

It is found in the nucleus. Its subcellular location is the cytoplasm. Functionally, probable transcription factor which binds the E box motif 5'-CA[TC][AG]TG-3'. The polypeptide is Helix-loop-helix protein 10 (Caenorhabditis elegans).